The following is a 245-amino-acid chain: tRNA (guanine-N(1)-)-methyltransferase (245 aa).

Residues G114 and I134–L139 contribute to the S-adenosyl-L-methionine site.

This sequence belongs to the RNA methyltransferase TrmD family. As to quaternary structure, homodimer.

Its subcellular location is the cytoplasm. It catalyses the reaction guanosine(37) in tRNA + S-adenosyl-L-methionine = N(1)-methylguanosine(37) in tRNA + S-adenosyl-L-homocysteine + H(+). In terms of biological role, specifically methylates guanosine-37 in various tRNAs. This chain is tRNA (guanine-N(1)-)-methyltransferase, found in Listeria welshimeri serovar 6b (strain ATCC 35897 / DSM 20650 / CCUG 15529 / CIP 8149 / NCTC 11857 / SLCC 5334 / V8).